Here is a 364-residue protein sequence, read N- to C-terminus: tRNA 2-selenouridine synthase (364 aa).

Positions 14–137 (LIADTPIIDV…LRQTAIQATI (124 aa)) constitute a Rhodanese domain. The active-site S-selanylcysteine intermediate is the Cys97.

Belongs to the SelU family. In terms of assembly, monomer.

The enzyme catalyses 5-methylaminomethyl-2-thiouridine(34) in tRNA + selenophosphate + (2E)-geranyl diphosphate + H2O + H(+) = 5-methylaminomethyl-2-selenouridine(34) in tRNA + (2E)-thiogeraniol + phosphate + diphosphate. It carries out the reaction 5-methylaminomethyl-2-thiouridine(34) in tRNA + (2E)-geranyl diphosphate = 5-methylaminomethyl-S-(2E)-geranyl-thiouridine(34) in tRNA + diphosphate. The catalysed reaction is 5-methylaminomethyl-S-(2E)-geranyl-thiouridine(34) in tRNA + selenophosphate + H(+) = 5-methylaminomethyl-2-(Se-phospho)selenouridine(34) in tRNA + (2E)-thiogeraniol. It catalyses the reaction 5-methylaminomethyl-2-(Se-phospho)selenouridine(34) in tRNA + H2O = 5-methylaminomethyl-2-selenouridine(34) in tRNA + phosphate. Functionally, involved in the post-transcriptional modification of the uridine at the wobble position (U34) of tRNA(Lys), tRNA(Glu) and tRNA(Gln). Catalyzes the conversion of 2-thiouridine (S2U-RNA) to 2-selenouridine (Se2U-RNA). Acts in a two-step process involving geranylation of 2-thiouridine (S2U) to S-geranyl-2-thiouridine (geS2U) and subsequent selenation of the latter derivative to 2-selenouridine (Se2U) in the tRNA chain. The chain is tRNA 2-selenouridine synthase from Shigella flexneri.